We begin with the raw amino-acid sequence, 180 residues long: DNA-directed RNA polymerase subunit omega (180 aa).

Positions 100 to 180 (ISKSGTPILP…NSDDSETTNS (81 aa)) are disordered. 2 stretches are compositionally biased toward acidic residues: residues 137-151 (EVDV…DEET) and 159-180 (AEAE…TTNS).

This sequence belongs to the RNA polymerase subunit omega family. As to quaternary structure, the RNAP catalytic core consists of 2 alpha, 1 beta, 1 beta' and 1 omega subunit. When a sigma factor is associated with the core the holoenzyme is formed, which can initiate transcription.

The catalysed reaction is RNA(n) + a ribonucleoside 5'-triphosphate = RNA(n+1) + diphosphate. Its function is as follows. Promotes RNA polymerase assembly. Latches the N- and C-terminal regions of the beta' subunit thereby facilitating its interaction with the beta and alpha subunits. This chain is DNA-directed RNA polymerase subunit omega, found in Pelagibacter ubique (strain HTCC1062).